Reading from the N-terminus, the 190-residue chain is Nucleoside triphosphate pyrophosphatase (190 aa).

D69 functions as the Proton acceptor in the catalytic mechanism.

It belongs to the Maf family. It depends on a divalent metal cation as a cofactor.

It is found in the cytoplasm. It catalyses the reaction a ribonucleoside 5'-triphosphate + H2O = a ribonucleoside 5'-phosphate + diphosphate + H(+). The catalysed reaction is a 2'-deoxyribonucleoside 5'-triphosphate + H2O = a 2'-deoxyribonucleoside 5'-phosphate + diphosphate + H(+). In terms of biological role, nucleoside triphosphate pyrophosphatase. May have a dual role in cell division arrest and in preventing the incorporation of modified nucleotides into cellular nucleic acids. The protein is Nucleoside triphosphate pyrophosphatase of Helicobacter pylori (strain HPAG1).